The primary structure comprises 388 residues: Quinolone resistance protein NorA (388 aa).

Transmembrane regions (helical) follow at residues 5–25 (IFVLYFNIFLIFLGIGLVIPV), 42–62 (LLVAAFALSQMIISPFGGTLA), 69–89 (LIICIGLILFSVSEFMFAVGH), 99–119 (VIGGMSAGMVMPGVTGLIADV), 129–149 (FGYMSAIINSGFILGPGIGGF), 157–177 (MPFYFAGALGILAFIMSVVLI), 201–221 (WKVFITPAILTLVLAFGLSAF), 239–259 (DISIAITGGGIFGALFQIYFF), 269–289 (LTFIAWSLIYSVIVLVLLVIA), 293–313 (WTIMVISFAVFIGFDMIRPAI), 331–351 (LNSTFTSMGNFIGPLIAGALF), and 355–375 (IEAPIYMAIGVSLAGVVIVLI).

This sequence belongs to the major facilitator superfamily. TCR/Tet family.

It localises to the cell membrane. Functionally, involved in quinolone resistance. May constitute a membrane-associated active efflux pump of hydrophilic quinolones. This is Quinolone resistance protein NorA (norA) from Staphylococcus aureus (strain MRSA252).